The primary structure comprises 331 residues: Ornithine carbamoyltransferase (331 aa).

Carbamoyl phosphate-binding positions include 57 to 60 (STRT), Gln82, Arg106, and 133 to 136 (HPTQ). L-ornithine-binding positions include Asn166, Asp230, and 234–235 (SM). Carbamoyl phosphate contacts are provided by residues 272–273 (CL) and Arg317.

It belongs to the aspartate/ornithine carbamoyltransferase superfamily. OTCase family.

It localises to the cytoplasm. It catalyses the reaction carbamoyl phosphate + L-ornithine = L-citrulline + phosphate + H(+). It functions in the pathway amino-acid degradation; L-arginine degradation via ADI pathway; carbamoyl phosphate from L-arginine: step 2/2. In terms of biological role, reversibly catalyzes the transfer of the carbamoyl group from carbamoyl phosphate (CP) to the N(epsilon) atom of ornithine (ORN) to produce L-citrulline. This is Ornithine carbamoyltransferase from Clostridium perfringens (strain SM101 / Type A).